A 464-amino-acid polypeptide reads, in one-letter code: Trigger factor (464 aa).

In terms of domain architecture, PPIase FKBP-type spans 162–243 (GDFISIDLSA…VGTVKERELP (82 aa)). The interval 428-464 (GASVDTAELFGNGEADTEEAASTDEVASDSAEGEDQK) is disordered.

Belongs to the FKBP-type PPIase family. Tig subfamily.

It localises to the cytoplasm. The catalysed reaction is [protein]-peptidylproline (omega=180) = [protein]-peptidylproline (omega=0). Its function is as follows. Involved in protein export. Acts as a chaperone by maintaining the newly synthesized protein in an open conformation. Functions as a peptidyl-prolyl cis-trans isomerase. The protein is Trigger factor of Rhodococcus opacus (strain B4).